The primary structure comprises 195 residues: Interferon tau-9 (195 aa).

The signal sequence occupies residues 1–23; it reads MAFVLSLLMALVLVSYGPGGSLG. Disulfide bonds link Cys-24–Cys-122 and Cys-52–Cys-162.

It belongs to the alpha/beta interferon family. IFN-alphaII subfamily. Constitutively and exclusively expressed in the mononuclear cells of the extraembryonic trophectoderm.

It is found in the secreted. Functionally, paracrine hormone primarily responsible for maternal recognition of pregnancy. Interacts with endometrial receptors, probably type I interferon receptors, and blocks estrogen receptor expression, preventing the estrogen-induced increase in oxytocin receptor expression in the endometrium. This results in the suppression of the pulsatile endometrial release of the luteolytic hormone prostaglandin F2-alpha, hindering the regression of the corpus luteum (luteolysis) and therefore a return to ovarian cyclicity. This, and a possible direct effect of IFN-tau on prostaglandin synthesis, leads in turn to continued ovarian progesterone secretion, which stimulates the secretion by the endometrium of the nutrients required for the growth of the conceptus. In summary, displays particularly high antiviral and antiproliferative potency concurrently with particular weak cytotoxicity, high antiluteolytic activity and immunomodulatory properties. In contrast with other IFNs, IFN-tau is not virally inducible. This chain is Interferon tau-9 (IFNT9), found in Ovis aries (Sheep).